A 356-amino-acid polypeptide reads, in one-letter code: uncharacterized protein (356 aa).

Transmembrane regions (helical) follow at residues Ser258 to Tyr275, Pro290 to Leu312, and Leu325 to Ser347.

It localises to the cell membrane. This is an uncharacterized protein from Archaeoglobus fulgidus (strain ATCC 49558 / DSM 4304 / JCM 9628 / NBRC 100126 / VC-16).